Reading from the N-terminus, the 113-residue chain is Gas vesicle protein I2 (113 aa).

Residues 1–93 (MTPTNRHTHG…TVPEQPTHAT (93 aa)) form a disordered region. Over residues 11 to 22 (QNAQHARRNAQQ) the composition is skewed to low complexity. The segment covering 52-63 (EQPTSDTTNPAA) has biased composition (polar residues). The segment covering 69–81 (AQRTNAQNAARNA) has biased composition (low complexity). Polar residues predominate over residues 82 to 93 (HSTVPEQPTHAT).

Belongs to the gas vesicle GvpI family. As to quaternary structure, gvpF to GvpM interact with each other in vitro, and may form multi-subunit complex(es). Interacts with GvpC and GvpO.

It localises to the gas vesicle. In terms of biological role, proteins GvpF to GvpM might be involved in nucleating gas vesicle formation. A minor component of the gas vesicle. Gas vesicles are hollow, gas filled proteinaceous nanostructures found in several microbial planktonic microorganisms. They allow positioning of halobacteria at the optimal depth for growth in the poorly aerated, shallow brine pools of their habitat. Functionally, expression of 2 c-vac DNA fragments containing 2 divergently transcribed regions (gvpE-gvpF-gvpG-gvpH-gvpI-gvpJ-gvpK-gvpL-gvpM and gvpA-gvpC-gvpN-gvpO) allows H.volcanii to produce gas vesicles. The polypeptide is Gas vesicle protein I2 (Halobacterium salinarum (strain ATCC 700922 / JCM 11081 / NRC-1) (Halobacterium halobium)).